Reading from the N-terminus, the 406-residue chain is 2,3-bisphosphoglycerate-independent phosphoglycerate mutase (406 aa).

This sequence belongs to the BPG-independent phosphoglycerate mutase family. A-PGAM subfamily.

The enzyme catalyses (2R)-2-phosphoglycerate = (2R)-3-phosphoglycerate. Its pathway is carbohydrate degradation; glycolysis; pyruvate from D-glyceraldehyde 3-phosphate: step 3/5. Its function is as follows. Catalyzes the interconversion of 2-phosphoglycerate and 3-phosphoglycerate. In Methanococcus maripaludis (strain DSM 14266 / JCM 13030 / NBRC 101832 / S2 / LL), this protein is 2,3-bisphosphoglycerate-independent phosphoglycerate mutase.